The chain runs to 340 residues: Guanine nucleotide-binding protein G(I)/G(S)/G(T) subunit beta-1 (340 aa).

Ser-2 carries the post-translational modification N-acetylserine. A Phosphoserine modification is found at Ser-2. WD repeat units follow at residues 46–94 (RTRR…HAIP), 95–140 (LRSS…RELA), 141–181 (GHTG…TTFT), 182–223 (GHTG…QTFT), 224–267 (GHES…YSHD), 268–309 (NIIC…GVLA), and 310–340 (GHDD…KIWN). Residue His-266 is modified to Phosphohistidine.

It belongs to the WD repeat G protein beta family. In terms of assembly, g proteins are composed of 3 units, alpha, beta and gamma. The heterodimer formed by GNB1 and GNG2 interacts with ARHGEF5. The heterodimer formed by GNB1 and GNG2 interacts with GRK2. Forms a complex with GNAO1 and GNG3. Interacts with ARHGEF18 and RASD2. Forms complexes with TAS2R14 and G-proteins; these complexes play a role in the perception of bitterness. Component of the TAS2R14-GNAI1 complex, consisting of TAS2R14, GNAI1, GNB1 and GNG2. Component of the TAS2R14-GNAT3 complex, consisting of TAS2R14, GNAT3, GNB1 and GNG2. Component of the TAS2R14-GNAS2 complex, consisting of TAS2R14, GNAS2, GNB1 and GNG2. Phosphorylation at His-266 by NDKB contributes to G protein activation by increasing the high energetic phosphate transfer onto GDP.

In terms of biological role, guanine nucleotide-binding proteins (G proteins) are involved as a modulator or transducer in various transmembrane signaling systems. The beta and gamma chains are required for the GTPase activity, for replacement of GDP by GTP, and for G protein-effector interaction. The polypeptide is Guanine nucleotide-binding protein G(I)/G(S)/G(T) subunit beta-1 (GNB1) (Pongo abelii (Sumatran orangutan)).